Consider the following 63-residue polypeptide: Sperm protamine P1 (63 aa).

A disordered region spans residues 1-47; the sequence is MARCRRHIRSRSRSRNQCQRRRRRSHYNRRRTYRRSRRHSRRRRVRR.

The protein belongs to the protamine P1 family. In terms of tissue distribution, testis.

It localises to the nucleus. The protein localises to the chromosome. Functionally, protamines substitute for histones in the chromatin of sperm during the haploid phase of spermatogenesis. They compact sperm DNA into a highly condensed, stable and inactive complex. This is Sperm protamine P1 (PRM1) from Planigale tenuirostris (Narrow-nosed planigale).